Here is a 965-residue protein sequence, read N- to C-terminus: Argonaute protein wago-4 (965 aa).

Positions 1 to 34 are disordered; the sequence is MPALPPVYTPSGAPSSVHAPPAVPPVPVPTQPLR. Over residues 10–20 the composition is skewed to low complexity; the sequence is PSGAPSSVHAP. Pro residues predominate over residues 21–30; it reads PAVPPVPVPT. The PAZ domain occupies 318–428; that stretch reads PILDKLKEIT…YPMELLKISS (111 aa). The 331-residue stretch at 594–924 folds into the Piwi domain; it reads TFVFIITDDS…YAKRGRNLWN (331 aa).

It belongs to the argonaute family. WAGO subfamily. In terms of assembly, interacts with znfx-1; the interaction promotes the transmission of epigenetic information across generations. May interact with mina-1. As to expression, expressed in the hermaphrodite germline and in oocytes. Expressed at a low level in the male germline. Not expressed in the soma of hermaphrodites or males.

Its subcellular location is the cytoplasm. The protein localises to the perinuclear region. The protein resides in the cytoplasmic granule. Argonaute protein which is involved in the endogenous small interfering RNA (endo-siRNA) pathway and is required for RNA-mediated gene silencing (RNAi) in the germline. Interacts with secondary 22G-RNAs, which are RNA-dependent RNA polymerase-derived endo-siRNAs, typically 22 nucleotides in length with a 5'guanosine residue. Also interacts with the mRNA targets of 22G-RNAs. Associates with znfx-1 to mediate small RNA-directed transgenerational epigenetic inheritance of both germline- and soma-expressed genes. The sequence is that of Argonaute protein wago-4 from Caenorhabditis elegans.